Here is a 64-residue protein sequence, read N- to C-terminus: Beta sliding clamp (64 aa).

It belongs to the beta sliding clamp family. As to quaternary structure, forms a ring-shaped head-to-tail homodimer around DNA which binds and tethers DNA polymerases and other proteins to the DNA. The DNA replisome complex has a single clamp-loading complex (3 tau and 1 each of delta, delta', psi and chi subunits) which binds 3 Pol III cores (1 core on the leading strand and 2 on the lagging strand) each with a beta sliding clamp dimer. Additional proteins in the replisome are other copies of gamma, psi and chi, Ssb, DNA helicase and RNA primase.

It localises to the cytoplasm. In terms of biological role, confers DNA tethering and processivity to DNA polymerases and other proteins. Acts as a clamp, forming a ring around DNA (a reaction catalyzed by the clamp-loading complex) which diffuses in an ATP-independent manner freely and bidirectionally along dsDNA. Initially characterized for its ability to contact the catalytic subunit of DNA polymerase III (Pol III), a complex, multichain enzyme responsible for most of the replicative synthesis in bacteria; Pol III exhibits 3'-5' exonuclease proofreading activity. The beta chain is required for initiation of replication as well as for processivity of DNA replication. This is Beta sliding clamp (dnaN) from Actinobacillus pleuropneumoniae (Haemophilus pleuropneumoniae).